Reading from the N-terminus, the 118-residue chain is Small ribosomal subunit protein uS13 (118 aa).

Residues 94 to 118 form a disordered region; the sequence is SLPLRGQRTKTNARTRKGPRKPIKK.

It belongs to the universal ribosomal protein uS13 family. Part of the 30S ribosomal subunit. Forms a loose heterodimer with protein S19. Forms two bridges to the 50S subunit in the 70S ribosome.

Located at the top of the head of the 30S subunit, it contacts several helices of the 16S rRNA. In the 70S ribosome it contacts the 23S rRNA (bridge B1a) and protein L5 of the 50S subunit (bridge B1b), connecting the 2 subunits; these bridges are implicated in subunit movement. Contacts the tRNAs in the A and P-sites. The chain is Small ribosomal subunit protein uS13 from Colwellia psychrerythraea (strain 34H / ATCC BAA-681) (Vibrio psychroerythus).